Consider the following 248-residue polypeptide: Transcription factor cicD (248 aa).

A compositionally biased stretch (basic and acidic residues) spans 1-22 (MVGSRHPDQCAKRWHHSLDPNV). A disordered region spans residues 1 to 25 (MVGSRHPDQCAKRWHHSLDPNVKRG). In terms of domain architecture, HTH myb-type spans 19 to 74 (DPNVKRGPWTMEEDSSLLEAVQKIGRDWKEIGRELFPSRSTTDIKNRYVILSRRRG). The H-T-H motif DNA-binding region spans 46 to 70 (WKEIGRELFPSRSTTDIKNRYVILS). Positions 186-208 (SELEGSFTSRNHEEPPQPLPVPD) are disordered.

It localises to the nucleus. Its function is as follows. Transcription factor that regulates the expression of the gene cluster that mediates the biosynthesis of cichorine, a phytotoxin active against knapweed, corn, and soybeans. In Emericella nidulans (strain FGSC A4 / ATCC 38163 / CBS 112.46 / NRRL 194 / M139) (Aspergillus nidulans), this protein is Transcription factor cicD.